Reading from the N-terminus, the 209-residue chain is CAAX box protein 1 (209 aa).

A disordered region spans residues 182–209 (TAGRPPRDLSPSARPISSPPPETSCVLA). Residue C206 is modified to Cysteine methyl ester. Residue C206 is the site of S-farnesyl cysteine attachment. Residues 207 to 209 (VLA) constitute a propeptide, removed in mature form.

Ubiquitous.

The protein resides in the cell membrane. The protein is CAAX box protein 1 of Homo sapiens (Human).